The chain runs to 557 residues: Polypyrimidine tract-binding protein 1 (557 aa).

The residue at position 1 (methionine 1) is an N-acetylmethionine. Serine 16 bears the Phosphoserine mark. 3 consecutive RRM domains span residues 59-143, 184-260, and 363-437; these read RVIH…SSPN, LRII…FSKL, and SVLL…LSKH. Lysine 65 participates in a covalent cross-link: Glycyl lysine isopeptide (Lys-Gly) (interchain with G-Cter in SUMO2). Position 127 is a phosphotyrosine (tyrosine 127). Phosphothreonine is present on threonine 138. Serine 141 bears the Phosphoserine mark. Lysine 218 is covalently cross-linked (Glycyl lysine isopeptide (Lys-Gly) (interchain with G-Cter in SUMO2)). At serine 459 the chain carries Phosphoserine. The RRM 4 domain maps to 480–555; it reads ATLHLSNIPP…HHLRVSFSKS (76 aa).

In terms of assembly, monomer. Part of a ternary complex containing KHSRP, PTBP1, PTBP2 and HNRPH1. Interacts with RAVER1 and SFPQ. Interacts with IVNS1ABP (via BACK domain); the interaction is direct.

It localises to the nucleus. Functionally, plays a role in pre-mRNA splicing and in the regulation of alternative splicing events. Activates exon skipping of its own pre-mRNA during muscle cell differentiation. Binds to the polypyrimidine tract of introns. May promote RNA looping when bound to two separate polypyrimidine tracts in the same pre-mRNA. May promote the binding of U2 snRNP to pre-mRNA. Cooperates with RAVER1 to modulate switching between mutually exclusive exons during maturation of the TPM1 pre-mRNA. Represses the splicing of MAPT/Tau exon 10. Binds to polypyrimidine-rich controlling element (PCE) of CFTR and promotes exon skipping of CFTR exon 9, thereby antagonizing TIA1 and its role in exon inclusion of CFTR exon 9. Plays a role in the splicing of pyruvate kinase PKM by binding repressively to a polypyrimidine tract flanking PKM exon 9, inhibiting exon 9 inclusion and resulting in exon 10 inclusion and production of the PKM M2 isoform. In case of infection by picornaviruses, binds to the viral internal ribosome entry site (IRES) and stimulates the IRES-mediated translation. The sequence is that of Polypyrimidine tract-binding protein 1 (PTBP1) from Homo sapiens (Human).